The primary structure comprises 92 residues: Small ribosomal subunit protein bS21A (92 aa).

Over residues 25–52 (GVFREMKQRRSYEKPSERKTREKSEAIR) the composition is skewed to basic and acidic residues. The interval 25 to 92 (GVFREMKQRR…LPQTAARPAG (68 aa)) is disordered.

Belongs to the bacterial ribosomal protein bS21 family.

The chain is Small ribosomal subunit protein bS21A from Bradyrhizobium diazoefficiens (strain JCM 10833 / BCRC 13528 / IAM 13628 / NBRC 14792 / USDA 110).